A 446-amino-acid polypeptide reads, in one-letter code: Methylenetetrahydrofolate--tRNA-(uracil-5-)-methyltransferase TrmFO (446 aa).

Position 9-14 (9-14 (GGGMAG)) interacts with FAD.

Belongs to the MnmG family. TrmFO subfamily. It depends on FAD as a cofactor.

The protein resides in the cytoplasm. The catalysed reaction is uridine(54) in tRNA + (6R)-5,10-methylene-5,6,7,8-tetrahydrofolate + NADH + H(+) = 5-methyluridine(54) in tRNA + (6S)-5,6,7,8-tetrahydrofolate + NAD(+). The enzyme catalyses uridine(54) in tRNA + (6R)-5,10-methylene-5,6,7,8-tetrahydrofolate + NADPH + H(+) = 5-methyluridine(54) in tRNA + (6S)-5,6,7,8-tetrahydrofolate + NADP(+). In terms of biological role, catalyzes the folate-dependent formation of 5-methyl-uridine at position 54 (M-5-U54) in all tRNAs. The chain is Methylenetetrahydrofolate--tRNA-(uracil-5-)-methyltransferase TrmFO from Ruegeria sp. (strain TM1040) (Silicibacter sp.).